The chain runs to 140 residues: Sex-regulated protein janus-B (140 aa).

Arginine 42 contributes to the substrate binding site. Histidine 69 (proton acceptor) is an active-site residue. 110–112 lines the substrate pocket; that stretch reads SRT.

The protein belongs to the janus family. As to expression, germline cells of adult males.

Its function is as follows. JanA and janB regulate somatic sex differentiation. The protein is Sex-regulated protein janus-B (janB) of Drosophila melanogaster (Fruit fly).